The sequence spans 185 residues: Ribosome-recycling factor (185 aa).

Belongs to the RRF family.

The protein localises to the cytoplasm. Functionally, responsible for the release of ribosomes from messenger RNA at the termination of protein biosynthesis. May increase the efficiency of translation by recycling ribosomes from one round of translation to another. The chain is Ribosome-recycling factor from Azotobacter vinelandii (strain DJ / ATCC BAA-1303).